Here is a 264-residue protein sequence, read N- to C-terminus: Zearalenone hydrolase (264 aa).

One can recognise an AB hydrolase-1 domain in the interval Val27–Pro207. The zearalenone site is built by Gly32, Ser102, and Ser103. Ser102 is an active-site residue. The active site involves Glu126. 4 residues coordinate zearalenone: Trp183, Tyr187, Ser220, and His242. The active site involves His242.

Belongs to the AB hydrolase superfamily. Hydrolase RutD family. As to quaternary structure, homodimer.

It carries out the reaction zearalenone + H2O = hydrolyzed zearalenone + H(+). In terms of biological role, lactonohydrolase that specifically hydrolyzes and deactivates the mycotoxin zearalenone (ZEN) and its zearalenol (ZOL) derivatives. ZHD101 prefers ZEN to ZOL as its substrate, but ZOL, especially the alpha-form, shows higher estrogenic toxicity than ZEN. The protein is Zearalenone hydrolase of Bionectria ochroleuca (Gliocladium roseum).